A 683-amino-acid polypeptide reads, in one-letter code: Elongation factor G 1 (683 aa).

Residues 3–278 (DKMRNIGIMA…AVVDFLPAPN (276 aa)) form the tr-type G domain. GTP contacts are provided by residues 12–19 (AHIDAGKT), 76–80 (DTPGH), and 130–133 (NKMD).

The protein belongs to the TRAFAC class translation factor GTPase superfamily. Classic translation factor GTPase family. EF-G/EF-2 subfamily.

Its subcellular location is the cytoplasm. Its function is as follows. Catalyzes the GTP-dependent ribosomal translocation step during translation elongation. During this step, the ribosome changes from the pre-translocational (PRE) to the post-translocational (POST) state as the newly formed A-site-bound peptidyl-tRNA and P-site-bound deacylated tRNA move to the P and E sites, respectively. Catalyzes the coordinated movement of the two tRNA molecules, the mRNA and conformational changes in the ribosome. The polypeptide is Elongation factor G 1 (Treponema denticola (strain ATCC 35405 / DSM 14222 / CIP 103919 / JCM 8153 / KCTC 15104)).